A 593-amino-acid polypeptide reads, in one-letter code: Solute carrier family 40 member 3, chloroplastic (593 aa).

Residues 1-23 (MSMSKLLSPPPTSPPGPALSRLP) are disordered. Residues 1–51 (MSMSKLLSPPPTSPPGPALSRLPCRRVAPPPVLPFPFPLRRLTSRRVFATS) constitute a chloroplast transit peptide. The segment covering 8–17 (SPPPTSPPGP) has biased composition (pro residues). 11 helical membrane-spanning segments follow: residues 181 to 201 (ILPV…AGPL), 219 to 239 (AAIQ…AFAV), 253 to 273 (FAVL…LGII), 303 to 322 (LLCE…KNNP), 323 to 343 (LTCI…LIFL), 403 to 423 (YVFV…TFLI), 431 to 451 (VIGA…FATA), 462 to 482 (AGAA…VVYL), 493 to 513 (LFAF…YSAI), 530 to 550 (IGAT…AVAV), and 557 to 577 (HFGA…GMYC).

It belongs to the ferroportin (FP) (TC 2.A.100) family. SLC40A subfamily.

Its subcellular location is the membrane. It localises to the plastid. It is found in the chloroplast envelope. Its function is as follows. May be involved in iron transport and iron homeostasis. The chain is Solute carrier family 40 member 3, chloroplastic from Oryza sativa subsp. japonica (Rice).